Reading from the N-terminus, the 433-residue chain is MKALSEVFGKLVEKIRGVSYIDEATLQDLSREIQRALLKADVPLDMVKAFTDAAVKRIKEEKPPAGIPPREYLLYVLYEELVKLLGGEQPPEFKPTKKPYVVLLLGVEGSGKTTTAAKLAKLLVKRGYKVGLVETDTVRPAAFDQLRQLAEKIGVPFYGERDGKDAVEIARRGVQNLKNLDVVIVDTAGRHRNEEALLQEVKAIYEAVSPDEVVLVIDATVGKLAAAQAEAFMRYLPIHSVIITKMDSTARGGGALAAVAKTGAKVKFIGVGEDVDELEMFIPRKFVARVLGMGDLDALVERIKAVFEEEQVIQEIESGKLDLLTFKKQIDGLLKLGPLSKVFQMLPGGLAAKISEEQIELSQKNLKKWRAILSSMTVEELKNPELLNASRIRRIALGAGVTPRDVKEMLTVYENLKRMSKTLKRQLRMKMPR.

GTP is bound by residues 106 to 113 (GVEGSGKT), 186 to 190 (DTAGR), and 244 to 247 (TKMD).

It belongs to the GTP-binding SRP family. SRP54 subfamily. In terms of assembly, part of the signal recognition particle protein translocation system, which is composed of SRP and FtsY. Archaeal SRP consists of a 7S RNA molecule of 300 nucleotides and two protein subunits: SRP54 and SRP19.

It is found in the cytoplasm. The enzyme catalyses GTP + H2O = GDP + phosphate + H(+). In terms of biological role, involved in targeting and insertion of nascent membrane proteins into the cytoplasmic membrane. Binds to the hydrophobic signal sequence of the ribosome-nascent chain (RNC) as it emerges from the ribosomes. The SRP-RNC complex is then targeted to the cytoplasmic membrane where it interacts with the SRP receptor FtsY. This Pyrobaculum neutrophilum (strain DSM 2338 / JCM 9278 / NBRC 100436 / V24Sta) (Thermoproteus neutrophilus) protein is Signal recognition particle 54 kDa protein.